The following is a 1457-amino-acid chain: DNA-directed RNA polymerase III subunit RPC1 (1457 aa).

Residues Cys-67, Cys-70, Cys-77, His-80, Cys-107, Cys-110, and Cys-154 each contribute to the Zn(2+) site. 3 residues coordinate Mg(2+): Asp-508, Asp-510, and Asp-512. Residues 854 to 866 are bridging helix; the sequence is PPEFLFHSISGRE.

Belongs to the RNA polymerase beta' chain family. As to quaternary structure, component of the RNA polymerase III (Pol III) complex consisting of 17 subunits.

It is found in the nucleus. It catalyses the reaction RNA(n) + a ribonucleoside 5'-triphosphate = RNA(n+1) + diphosphate. Functionally, DNA-dependent RNA polymerase catalyzes the transcription of DNA into RNA using the four ribonucleoside triphosphates as substrates. Largest and catalytic core component of RNA polymerase III which synthesizes small RNAs, such as 5S rRNA and tRNAs. Forms the polymerase active center together with the second largest subunit. A single-stranded DNA template strand of the promoter is positioned within the central active site cleft of Pol III. A bridging helix emanates from RPC1 and crosses the cleft near the catalytic site and is thought to promote translocation of Pol III by acting as a ratchet that moves the RNA-DNA hybrid through the active site by switching from straight to bent conformations at each step of nucleotide addition. The sequence is that of DNA-directed RNA polymerase III subunit RPC1 (RPC1) from Debaryomyces hansenii (strain ATCC 36239 / CBS 767 / BCRC 21394 / JCM 1990 / NBRC 0083 / IGC 2968) (Yeast).